The primary structure comprises 134 residues: Small ribosomal subunit protein uS11 (134 aa).

Belongs to the universal ribosomal protein uS11 family. As to quaternary structure, part of the 30S ribosomal subunit. Interacts with proteins S7 and S18. Binds to IF-3.

Its function is as follows. Located on the platform of the 30S subunit, it bridges several disparate RNA helices of the 16S rRNA. Forms part of the Shine-Dalgarno cleft in the 70S ribosome. The protein is Small ribosomal subunit protein uS11 of Polaromonas sp. (strain JS666 / ATCC BAA-500).